Reading from the N-terminus, the 185-residue chain is Early nodulin-like protein 17 (185 aa).

The signal sequence occupies residues 1–21; that stretch reads MARRDQLVSFLCFFLIVSAVA. Residues 37 to 137 form the Phytocyanin domain; that stretch reads KQYVVGGRSG…GQRLMINVDS (101 aa). 2 N-linked (GlcNAc...) asparagine glycosylation sites follow: Asn79 and Asn94. Residues Cys93 and Cys125 are joined by a disulfide bond. The disordered stretch occupies residues 136-155; it reads DSAPSPSPSPSPAPQEAATA. Ser156 carries GPI-anchor amidated serine lipidation. Positions 157-185 are cleaved as a propeptide — removed in mature form; it reads AATSSSAATAAHALLLAAMAMMGLILGEW.

It belongs to the early nodulin-like (ENODL) family. As to expression, expressed ubiquitously. Accumulates mainly in anthers, stigmas and ovaries.

Its subcellular location is the cell membrane. May act as a carbohydrate transporter. Required for male fertility and seed yield. This chain is Early nodulin-like protein 17, found in Oryza sativa subsp. japonica (Rice).